The chain runs to 257 residues: MSRPLITRSPASPLNNQGIPTPAQLTKSNAPVHIDVGGHMYTSSLATLTKYPESRIGRLFDGTEPIVLDSLKQHYFIDRDGQMFRYILNFLRTSKLLIPDDFKDYTLLYEEAKYFQLQPMLLEMERWKQDRESGRFSRPCECLVVRVAPDLGERITLSGDKSLIEEVFPEIGDVMCNSVNAGWNHDSTHVIRFPLNGYCHLNSVQVLERLQQRGFEVVGSCGGGVDSSQFSEYVLRRELRRTPRGPSVIRIKQEPLD.

The segment at 1–25 (MSRPLITRSPASPLNNQGIPTPAQL) is disordered. Residues serine 9 and serine 12 each carry the phosphoserine modification. The span at 9-25 (SPASPLNNQGIPTPAQL) shows a compositional bias: polar residues. Residues 30-100 (APVHIDVGGH…LRTSKLLIPD (71 aa)) enclose the BTB domain.

As to quaternary structure, forms homopentamers. Interacts with KCTD15, probably forming heteropentamers depending on its abundance in a cell-type dependent manner. Interacts with TFAP2A, TFAP2B and TFAP2C via the BTB domain. In terms of processing, sumoylated.

The protein resides in the nucleus. In terms of biological role, may repress the transcriptional activity of AP-2 family members, including TFAP2A, TFAP2B and TFAP2C to various extent. This Bos taurus (Bovine) protein is BTB/POZ domain-containing protein KCTD1 (KCTD1).